The chain runs to 476 residues: WASH complex subunit 1 (476 aa).

A required for WASH complex assembly region spans residues 1 to 54 (MTTVAQKHFLEGQTYSVPLIQPDLRREEAVQQVADALQYLQKVSGDIFNRISQR). 2 disordered regions span residues 273-412 (SAPS…QGGD) and 427-476 (GISG…DWES). Positions 284 to 296 (TFSTESVEPSQAD) are enriched in polar residues. A compositionally biased stretch (pro residues) spans 302 to 333 (LLPPPPPPPPPPPPVMPTTVPPPPPLPQPTAP). The tract at residues 354–476 (QGAPKEVVNP…GEEDEDDWES (123 aa)) is VCA. Residues 366 to 388 (GRASLLESIRQAGGIGKANLRSV) enclose the WH2 domain. The span at 387 to 403 (SVKERKLEKKKQKEQEQ) shows a compositional bias: basic and acidic residues. Positions 467–476 (GEEDEDDWES) are enriched in acidic residues.

The protein belongs to the WASH1 family. In terms of assembly, component of the WASH complex.

Its subcellular location is the early endosome membrane. The protein resides in the recycling endosome membrane. Functionally, acts as a nucleation-promoting factor at the surface of endosomes, where it recruits and activates the Arp2/3 complex to induce actin polymerization, playing a key role in the fission of tubules that serve as transport intermediates during endosome sorting. This is WASH complex subunit 1 from Gallus gallus (Chicken).